A 341-amino-acid chain; its full sequence is MSKSKDDAPHELESQFILRLPPEYASTVRRAVQSGHVNLKDRLTIELHPDGRHGIVRVDRVPLAAKLVDLPCVMESLKTIDKKTFYKTADICQMLVSTVDGDLYPPVEEPVAPADPKASKKKDKDKEKKFVWNHGITLPLKNVRKRRFRKTAKKKYIESPDVEKEVKRLLSTDAEAVSTRWEIIAEDETKETENQGLDISSPGMSGHRQGHDSLEHDELREIFNDLSSSSEDEEDVNVIDTEEDLERQLQDKLNESDEQHQENEGTNQLVMGIQKQIDNMKGKLQETQDRAKRQEDLIMKVENLALKNRFQAVLDELKQKEDREKEQLSSLQEGLESLLEK.

Residues 105 to 116 are compositionally biased toward low complexity; sequence PPVEEPVAPADP. A disordered region spans residues 105-126; the sequence is PPVEEPVAPADPKASKKKDKDK. Residues Ser-171, Ser-200, Ser-201, Ser-213, and Ser-256 each carry the phosphoserine modification. Residues 188–212 form a disordered region; that stretch reads ETKETENQGLDISSPGMSGHRQGHD. The stretch at 236–341 forms a coiled coil; that stretch reads VNVIDTEEDL…QEGLESLLEK (106 aa). The tract at residues 321 to 341 is disordered; that stretch reads EDREKEQLSSLQEGLESLLEK. Over residues 328-341 the composition is skewed to low complexity; that stretch reads LSSLQEGLESLLEK.

The protein belongs to the TAF7 family. In terms of assembly, component of the TFIID basal transcription factor complex, composed of TATA-box-binding protein TBP, and a number of TBP-associated factors (TAFs), including TAF1, TAF2, TAF3, TAF4, TAF5, TAF6, TAF7, TAF8, TAF9, TAF10, TAF11, TAF12 and TAF13. Part of a TFIID-containing RNA polymerase II pre-initiation complex that is composed of TBP and at least GTF2A1, GTF2A2, GTF2E1, GTF2E2, GTF2F1, GTF2H2, GTF2H3, GTF2H4, GTF2H5, GTF2B, TCEA1, ERCC2, ERCC3, TAF1, TAF2, TAF3, TAF4, TAF5, TAF6, TAF7, TAF8, TAF9, TAF10, TAF11, TAF12 and TAF13. Interacts with TAF1; the interaction is direct. Interacts with TAF1, TAF5, TAF11, TAF12, and TAF13, but not with TAF10 or TBP. Component of some MLL1/MLL complex, at least composed of the core components KMT2A/MLL1, ASH2L, HCFC1/HCF1, WDR5 and RBBP5, as well as the facultative components BACC1, CHD8, E2F6, HSP70, INO80C, KANSL1, LAS1L, MAX, MCRS1, MGA, MYST1/MOF, PELP1, PHF20, PRP31, RING2, RUVB1/TIP49A, RUVB2/TIP49B, SENP3, TAF1, TAF4, TAF6, TAF7, TAF9 and TEX10. Interacts with CIITA and TAF1 and inhibits their acetyltransferase activity, and behaving as a repressor of CIITA- and TAF1-regulated promoters. In terms of processing, phosphorylated by CIITA. Phosphorylation at Ser-256 by TAF1 in early G1 phase disrupts binding to TAF1. Post-translationally, ubiquitinated by TRIM26; leading to proteasomal degradation.

Its subcellular location is the nucleus. The TFIID basal transcription factor complex plays a major role in the initiation of RNA polymerase II (Pol II)-dependent transcription. TFIID recognizes and binds promoters with or without a TATA box via its subunit TBP, a TATA-box-binding protein, and promotes assembly of the pre-initiation complex (PIC). The TFIID complex consists of TBP and TBP-associated factors (TAFs), including TAF1, TAF2, TAF3, TAF4, TAF5, TAF6, TAF7, TAF8, TAF9, TAF10, TAF11, TAF12 and TAF13. TAF7 forms a promoter DNA binding subcomplex of TFIID, together with TAF1 and TAF2. Part of a TFIID complex containing TAF10 (TFIID alpha) and a TFIID complex lacking TAF10 (TFIID beta). The sequence is that of Transcription initiation factor TFIID subunit 7 (TAF7) from Cricetulus griseus (Chinese hamster).